A 387-amino-acid polypeptide reads, in one-letter code: Protein salvador homolog 1 (387 aa).

A phosphoserine mark is found at S95 and S138. WW domains are found at residues 201–234 (LPLP…HPLE) and 236–269 (EGLP…HPCA). T212 bears the Phosphothreonine mark. Positions 323–370 (ILKWELFQLADLDTYQGMLKLLFMKELEQIVKLYEAYRQALVTELENR) constitute an SARAH domain.

As to quaternary structure, homodimer. Stabilized through interaction with STK3/MST2 or STK4/MST1. Interacts (via SARAH domain) with isoform 1 of NEK2. Interacts with ESR1 only in the presence of STK3/MST2. Interacts with WTIP and AJUBA. Phosphorylated by STK3/MST2 and STK4/MST1. Phosphorylation is not required for SAV1 stability and may increase the number of protein binding sites on the scaffold molecule.

The protein resides in the nucleus. Its subcellular location is the cytoplasm. In terms of biological role, regulator of STK3/MST2 and STK4/MST1 in the Hippo signaling pathway which plays a pivotal role in organ size control and tumor suppression by restricting proliferation and promoting apoptosis. The core of this pathway is composed of a kinase cascade wherein STK3/MST2 and STK4/MST1, in complex with its regulatory protein SAV1, phosphorylates and activates LATS1/2 in complex with its regulatory protein MOB1, which in turn phosphorylates and inactivates YAP1 oncoprotein and WWTR1/TAZ. Phosphorylation of YAP1 by LATS1/2 inhibits its translocation into the nucleus to regulate cellular genes important for cell proliferation, cell death, and cell migration. SAV1 is required for STK3/MST2 and STK4/MST1 activation and promotes cell-cycle exit and terminal differentiation in developing epithelial tissues. Plays a role in centrosome disjunction by regulating the localization of NEK2 to centrosomes, and its ability to phosphorylate CROCC and CEP250. In conjunction with STK3/MST2, activates the transcriptional activity of ESR1 through the modulation of its phosphorylation. The chain is Protein salvador homolog 1 from Rattus norvegicus (Rat).